A 265-amino-acid chain; its full sequence is Large ribosomal subunit protein bL9m (265 aa).

Residues 1–49 (MAASVAPGVRTLWWAGAAWLRQGGIRELFRPRIEGSTPGRDFSLSHYQS) constitute a mitochondrion transit peptide.

The protein belongs to the bacterial ribosomal protein bL9 family. Component of the mitochondrial ribosome large subunit (39S) which comprises a 16S rRNA and about 50 distinct proteins.

The protein resides in the mitochondrion. This is Large ribosomal subunit protein bL9m (Mrpl9) from Mus musculus (Mouse).